The primary structure comprises 244 residues: Agamous-like MADS-box protein MADS3 (244 aa).

The 61-residue stretch at 1-61 folds into the MADS-box domain; it reads MGRGRVELKR…GKLYEFGSAG (61 aa). A K-box domain is found at 85–175; the sequence is TQSWYQEVSK…KLKLEAEGQS (91 aa). The interval 180–206 is disordered; it reads QGSWNPSTATAGNSSFPVHPSQSNPMD. Residues 181–204 are compositionally biased toward polar residues; that stretch reads GSWNPSTATAGNSSFPVHPSQSNP.

In terms of tissue distribution, expressed in flowers and seeds.

It is found in the nucleus. Probable transcription factor involved in flower development. This chain is Agamous-like MADS-box protein MADS3, found in Vitis vinifera (Grape).